Consider the following 315-residue polypeptide: Ribosomal RNA small subunit methyltransferase H (315 aa).

Residues A35–H37, D55, F84, D105, and Q112 contribute to the S-adenosyl-L-methionine site.

Belongs to the methyltransferase superfamily. RsmH family.

The protein localises to the cytoplasm. The enzyme catalyses cytidine(1402) in 16S rRNA + S-adenosyl-L-methionine = N(4)-methylcytidine(1402) in 16S rRNA + S-adenosyl-L-homocysteine + H(+). Specifically methylates the N4 position of cytidine in position 1402 (C1402) of 16S rRNA. The protein is Ribosomal RNA small subunit methyltransferase H of Streptococcus agalactiae serotype Ia (strain ATCC 27591 / A909 / CDC SS700).